The following is a 396-amino-acid chain: Tryptophan synthase beta chain (396 aa).

K86 is subject to N6-(pyridoxal phosphate)lysine.

Belongs to the TrpB family. Tetramer of two alpha and two beta chains. Requires pyridoxal 5'-phosphate as cofactor.

It carries out the reaction (1S,2R)-1-C-(indol-3-yl)glycerol 3-phosphate + L-serine = D-glyceraldehyde 3-phosphate + L-tryptophan + H2O. It participates in amino-acid biosynthesis; L-tryptophan biosynthesis; L-tryptophan from chorismate: step 5/5. The beta subunit is responsible for the synthesis of L-tryptophan from indole and L-serine. The chain is Tryptophan synthase beta chain from Pectobacterium carotovorum subsp. carotovorum (strain PC1).